A 291-amino-acid chain; its full sequence is Acetyl-coenzyme A carboxylase carboxyl transferase subunit beta (291 aa).

The CoA carboxyltransferase N-terminal domain occupies 36–291 (MWVKCDGCGK…KILVIHGRGN (256 aa)). Cys-40, Cys-43, Cys-59, and Cys-62 together coordinate Zn(2+). Residues 40-62 (CDGCGKVLYKNDMEKNNKVCYHC) form a C4-type zinc finger.

It belongs to the AccD/PCCB family. In terms of assembly, acetyl-CoA carboxylase is a heterohexamer composed of biotin carboxyl carrier protein (AccB), biotin carboxylase (AccC) and two subunits each of ACCase subunit alpha (AccA) and ACCase subunit beta (AccD). It depends on Zn(2+) as a cofactor.

The protein resides in the cytoplasm. It carries out the reaction N(6)-carboxybiotinyl-L-lysyl-[protein] + acetyl-CoA = N(6)-biotinyl-L-lysyl-[protein] + malonyl-CoA. Its pathway is lipid metabolism; malonyl-CoA biosynthesis; malonyl-CoA from acetyl-CoA: step 1/1. Functionally, component of the acetyl coenzyme A carboxylase (ACC) complex. Biotin carboxylase (BC) catalyzes the carboxylation of biotin on its carrier protein (BCCP) and then the CO(2) group is transferred by the transcarboxylase to acetyl-CoA to form malonyl-CoA. The polypeptide is Acetyl-coenzyme A carboxylase carboxyl transferase subunit beta (Clostridium kluyveri (strain NBRC 12016)).